Consider the following 963-residue polypeptide: MAAQCESIGGDMNQSDPGSNSERSADSPVPGSEDDSPHDPEWREERFRVDRKKLETMLQAAAEGKGKSGEDFFQKIMEETNTQIAWPSKLKIGAKSKKDPHIKVSGKKENVKEAKERIMSVLDTKSNRVTLKMDVLHTEHSHVIGKGGNNIKKVMEETGCHIHFPDSNRNNQAEKSNQVSIAGQPAGVESARVRIRELLPLVLMFELPIAGILQPIPDPNSPTIQQISQTYNLTVSFKQRSRVYGATVIVRGSQNNTSAVKEGTAMLLEHLAGSLATAIPVSTQLDIAAQHHLFMMGRNGCNIKHIMQRTGAQIHFPDPNNPLKKSTVYLQGTIDSVCLARQYLMGCLPLVLMFDMKEEIEIEPQCITQLMEQLDVFISIKPKPKQPSKSVIVKSVERNALNMYEARKCLLGLDSSGVTVTNQSTLSCPVPMNCHGLDILAAGLGLSGLGLLGPNTLSVNSTTAQNSLLNALNSSLSPLHSPSSAAPSPTLWAASLANNATGFSAIPHLMIPSAAQATLTNFLLSGVPNYGQNTPSPPPGLTPVDVHMNGIHSECKKVTSALNGHVKPTNMKYGTISSSSLGDKVLNTNLAEASRQSNNHSSAEEVNSKTDPEGCNDAFVEVGMPRSPSHSANTKDLKQMLNSTKAPCPTRQTVKLLHGTKNSHLHGERLLSDSEMSPMEGPVTDKKAPGSERAAERAAAQQNSERARLTSQSEYGTMQAYDYEQKKLLATKAMLKKPVVTEVRTPTNTWSGLGFSKSTPAETIKELRRANHVPYKPTMTTTYENSSLSRSNSREQLGNGSDSENWRERNGIDSSQNDYSSSIGSPKRKQNKSAEHYLSSSNYMDCISSLTGSNGCNLNSSFKGSDLPELFSKLGLGKYTDIFQQQEIDLQTFLTLTDQDLKELGISTFGARRKMLLAISELNKNRRKLFEPTNIRASFLEGGASGRLPRQYHTDIASVSGRW.

The segment at 1–48 (MAAQCESIGGDMNQSDPGSNSERSADSPVPGSEDDSPHDPEWREERFR) is disordered. Residues 12-22 (MNQSDPGSNSE) are compositionally biased toward polar residues. Residues 35–48 (DSPHDPEWREERFR) are compositionally biased toward basic and acidic residues. 2 consecutive KH domains span residues 128-195 (RVTL…RVRI) and 280-344 (PVST…RQYL). The segment covering 592-601 (EASRQSNNHS) has biased composition (polar residues). 3 disordered regions span residues 592 to 613 (EASR…TDPE), 668 to 713 (ERLL…TSQS), and 767 to 834 (LRRA…NKSA). 2 stretches are compositionally biased toward basic and acidic residues: residues 602 to 612 (SAEEVNSKTDP) and 683 to 696 (VTDK…RAAE). Residues 784–797 (ENSSLSRSNSREQL) are compositionally biased toward low complexity. A compositionally biased stretch (polar residues) spans 812 to 824 (IDSSQNDYSSSIG). The SAM domain maps to 862 to 925 (FKGSDLPELF…LLAISELNKN (64 aa)).

Belongs to the BicC family.

Functionally, putative RNA-binding protein. May be involved in regulating gene expression during embryonic development. Seems to be involved in endoderm formation. Ectopic expression results in endoderm formation in the absence of mesoderm induction. This Xenopus laevis (African clawed frog) protein is Protein bicaudal C homolog 1-A (bicc1-a).